Here is a 218-residue protein sequence, read N- to C-terminus: Octanoyltransferase (218 aa).

The 176-residue stretch at 31 to 206 (REAGDEVWLV…QLVKHLDYAE (176 aa)) folds into the BPL/LPL catalytic domain. Substrate-binding positions include 70-77 (RGGQVTYH), 137-139 (SLG), and 150-152 (GLA). The active-site Acyl-thioester intermediate is C168.

The protein belongs to the LipB family.

The protein localises to the cytoplasm. It catalyses the reaction octanoyl-[ACP] + L-lysyl-[protein] = N(6)-octanoyl-L-lysyl-[protein] + holo-[ACP] + H(+). It functions in the pathway protein modification; protein lipoylation via endogenous pathway; protein N(6)-(lipoyl)lysine from octanoyl-[acyl-carrier-protein]: step 1/2. Catalyzes the transfer of endogenously produced octanoic acid from octanoyl-acyl-carrier-protein onto the lipoyl domains of lipoate-dependent enzymes. Lipoyl-ACP can also act as a substrate although octanoyl-ACP is likely to be the physiological substrate. This chain is Octanoyltransferase, found in Pseudomonas syringae pv. tomato (strain ATCC BAA-871 / DC3000).